The chain runs to 446 residues: Xylose isomerase 2 (446 aa).

Active-site residues include histidine 109 and aspartate 112. Positions 240, 276, 279, 304, 315, 317, and 347 each coordinate Mg(2+).

The protein belongs to the xylose isomerase family. As to quaternary structure, homotetramer. Requires Mg(2+) as cofactor.

Its subcellular location is the cytoplasm. The catalysed reaction is alpha-D-xylose = alpha-D-xylulofuranose. This chain is Xylose isomerase 2, found in Xanthomonas campestris pv. campestris (strain 8004).